Consider the following 150-residue polypeptide: Large ribosomal subunit protein eL19 (150 aa).

A disordered region spans residues 56-89 (KGQSRARARAFQEARKKGRHRGPGSKKGKKTARM). Residues 71-89 (KKGRHRGPGSKKGKKTARM) show a composition bias toward basic residues.

The protein belongs to the eukaryotic ribosomal protein eL19 family. In terms of assembly, part of the 50S ribosomal subunit.

Its function is as follows. Binds to the 23S rRNA. This Thermococcus kodakarensis (strain ATCC BAA-918 / JCM 12380 / KOD1) (Pyrococcus kodakaraensis (strain KOD1)) protein is Large ribosomal subunit protein eL19.